The following is an 86-amino-acid chain: Myosuppressin (86 aa).

An N-terminal signal peptide occupies residues 1–18 (MAIFCNNVLAALPTQCNP). A propeptide spanning residues 19-70 (GFLDDLPPRIRKVCVALSRIYELGSEMESYIGDKENHITGFHESIPLLDSGV) is cleaved from the precursor. Gln73 carries the pyrrolidone carboxylic acid modification. Residue Phe82 is modified to Phenylalanine amide.

The protein localises to the secreted. Myoinhibiting neuropeptide. This Apis mellifera (Honeybee) protein is Myosuppressin.